We begin with the raw amino-acid sequence, 370 residues long: ATP synthase gamma chain, chloroplastic (370 aa).

A chloroplast-targeting transit peptide spans 1–54 (MRSFCIAALLAVASAFTTQPTSFTVKTANVGERASGVFPEQSSAHRTRKATIVM). Cysteine 145 is a catalytic residue.

Belongs to the ATPase gamma chain family. F-type ATPases have 2 components, CF(1) - the catalytic core - and CF(0) - the membrane proton channel. CF(1) has five subunits: alpha(3), beta(3), gamma(1), delta(1), epsilon(1). CF(0) has four main subunits: a, b, b' and c.

It is found in the plastid. The protein localises to the chloroplast thylakoid membrane. Produces ATP from ADP in the presence of a proton gradient across the membrane. The gamma chain is believed to be important in regulating ATPase activity and the flow of protons through the CF(0) complex. The polypeptide is ATP synthase gamma chain, chloroplastic (ATPC) (Phaeodactylum tricornutum (Diatom)).